Here is a 305-residue protein sequence, read N- to C-terminus: 17-beta-hydroxysteroid dehydrogenase type 3 (305 aa).

Residue glycine 44–leucine 73 coordinates NADP(+). Serine 181 is a binding site for substrate. The active-site Proton acceptor is tyrosine 194.

This sequence belongs to the short-chain dehydrogenases/reductases (SDR) family. 17-beta-HSD 3 subfamily. In terms of tissue distribution, expressed in the testes.

The protein localises to the endoplasmic reticulum. The catalysed reaction is a 17beta-hydroxy steroid + NADP(+) = a 17-oxo steroid + NADPH + H(+). It carries out the reaction testosterone + NADP(+) = androst-4-ene-3,17-dione + NADPH + H(+). It catalyses the reaction 17beta-estradiol + NADP(+) = estrone + NADPH + H(+). The enzyme catalyses 3beta-hydroxyandrost-5-en-17-one + NADPH + H(+) = androst-5-en-3beta,17beta-diol + NADP(+). The catalysed reaction is 17beta-hydroxy-5alpha-androstan-3-one + NADP(+) = 5alpha-androstan-3,17-dione + NADPH + H(+). It carries out the reaction androsterone + NADPH + H(+) = 5alpha-androstane-3alpha,17beta-diol + NADP(+). It catalyses the reaction 3beta-hydroxy-5alpha-androstan-17-one + NADPH + H(+) = 5alpha-androstane-3beta,17beta-diol + NADP(+). The enzyme catalyses androst-4-ene-3,11,17-trione + NADPH + H(+) = 17beta-hydroxyandrost-4-ene-3,11-dione + NADP(+). The catalysed reaction is 11beta-hydroxyandrost-4-ene-3,17-dione + NADPH + H(+) = 11beta,17beta-dihydroxyandrost-4-ene-3-one + NADP(+). It participates in hormone biosynthesis; testosterone biosynthesis. Its pathway is steroid metabolism. Functionally, catalyzes the conversion of 17-oxosteroids to 17beta-hydroxysteroids. Favors the reduction of androstenedione to testosterone. Testosterone is the key androgen driving male development and function. Uses NADPH while the two other EDH17B enzymes use NADH. Androgens such as epiandrosterone, dehydroepiandrosterone, androsterone and androstanedione are accepted as substrates and reduced at C-17. Can reduce 11-ketoandrostenedione as well as 11beta-hydroxyandrostenedione at C-17 to the respective testosterone forms. Plays a role in the rate-limiting-step for the maximum level of testosterone production by the testis but does not affect basal testosterone production. The sequence is that of 17-beta-hydroxysteroid dehydrogenase type 3 from Mus musculus (Mouse).